A 903-amino-acid polypeptide reads, in one-letter code: Translation initiation factor IF-2 (903 aa).

Disordered regions lie at residues 57–171 (EKFK…QRRR) and 267–318 (PTPQ…EAVT). Basic and acidic residues predominate over residues 69-163 (KKEAKEPSEK…SEPQKPKESL (95 aa)). Over residues 267-278 (PTPQPMQKTKQP) the composition is skewed to low complexity. Positions 299 to 308 (RRARKKHKKP) are enriched in basic residues. Residues 402–569 (PRAPVITIMG…IVLLQAEILE (168 aa)) enclose the tr-type G domain. Residues 411–418 (GHVDHGKT) form a G1 region. GTP is bound at residue 411–418 (GHVDHGKT). The G2 stretch occupies residues 436 to 440 (GITQH). The segment at 457-460 (DTPG) is G3. Residues 457 to 461 (DTPGH) and 511 to 514 (NKMD) each bind GTP. The interval 511-514 (NKMD) is G4. Residues 547-549 (SAK) are G5.

Belongs to the TRAFAC class translation factor GTPase superfamily. Classic translation factor GTPase family. IF-2 subfamily.

The protein resides in the cytoplasm. One of the essential components for the initiation of protein synthesis. Protects formylmethionyl-tRNA from spontaneous hydrolysis and promotes its binding to the 30S ribosomal subunits. Also involved in the hydrolysis of GTP during the formation of the 70S ribosomal complex. This Campylobacter curvus (strain 525.92) protein is Translation initiation factor IF-2.